Here is a 62-residue protein sequence, read N- to C-terminus: Mu-conotoxin Lt5d (62 aa).

An N-terminal signal peptide occupies residues M1 to A22. A propeptide spanning residues Q23–N48 is cleaved from the precursor.

This sequence belongs to the conotoxin T superfamily. Post-translationally, contains 2 disulfide bonds that can be either 'C1-C3, C2-C4' or 'C1-C4, C2-C3', since these disulfide connectivities have been observed for conotoxins with cysteine framework V (for examples, see AC P0DQQ7 and AC P81755). Expressed by the venom duct.

The protein localises to the secreted. Its function is as follows. Mu-conotoxins block voltage-gated sodium channels (Nav). This toxin inhibits tetrodotoxin(TTX)-sensitive sodium channels, but does not affect TTX-resistant sodium channels. Reduces the amplitude of currents without changing the activation and inactivation kinetics of currents. The polypeptide is Mu-conotoxin Lt5d (Conus litteratus (Lettered cone)).